We begin with the raw amino-acid sequence, 213 residues long: ATP-dependent dethiobiotin synthetase BioD (213 aa).

G13–V18 is a binding site for ATP. Mg(2+) is bound at residue T17. K33 is an active-site residue. A Mg(2+)-binding site is contributed by E100. ATP contacts are provided by residues E100–G103 and P184–L186.

It belongs to the dethiobiotin synthetase family. In terms of assembly, homodimer. Mg(2+) is required as a cofactor.

It localises to the cytoplasm. The catalysed reaction is (7R,8S)-7,8-diammoniononanoate + CO2 + ATP = (4R,5S)-dethiobiotin + ADP + phosphate + 3 H(+). It participates in cofactor biosynthesis; biotin biosynthesis; biotin from 7,8-diaminononanoate: step 1/2. In terms of biological role, catalyzes a mechanistically unusual reaction, the ATP-dependent insertion of CO2 between the N7 and N8 nitrogen atoms of 7,8-diaminopelargonic acid (DAPA, also called 7,8-diammoniononanoate) to form a ureido ring. This is ATP-dependent dethiobiotin synthetase BioD from Rhodopseudomonas palustris (strain HaA2).